We begin with the raw amino-acid sequence, 258 residues long: MLFLLSPAKSLDYDTPPHVSTYTKPLFTRQSAELIDVLQTKTPQQISTLMKLSDALSGLNVARYQAWSPKFTAKNSKQAVLAFNGDVYGGLDAKTLSEQQLGWAQEHVCILSGLYGVLRPLDWMQPYRLEMGTALATGQGKNLYQFWGSQIADYLNQRAAAHTSPVIVNLASEEYFKAVDRKALKARVVSCVFEEFRAGKYKIISFMAKRARGLMVRYATEHKLLTVRKLEGFDAEGYRFDPAASQADRLVFRRRQAA.

It belongs to the UPF0246 family.

The polypeptide is UPF0246 protein Bpro_3713 (Polaromonas sp. (strain JS666 / ATCC BAA-500)).